Here is a 367-residue protein sequence, read N- to C-terminus: Developmentally-regulated GTP-binding protein 1 (367 aa).

Ser2 carries the post-translational modification N-acetylserine. Positions 2–16 are required for interaction with STK16; the sequence is SSTLAKIAEIEAEMA. Lys22 is modified ((3S)-3-hydroxylysine). One can recognise an OBG-type G domain in the interval 65-290; that stretch reads ARIGFVGFPS…LLEKIWDYLK (226 aa). GTP-binding positions include 71 to 78, 96 to 100, 117 to 120, 248 to 251, and 271 to 273; these read GFPSVGKS, FTTLT, DLPG, NKID, and SAH. 2 residues coordinate Mg(2+): Ser78 and Thr98. A Phosphothreonine; by STK16 modification is found at Thr100. In terms of domain architecture, TGS spans 290–366; the sequence is KLVRIYTKPK…EDEDVIQIVK (77 aa).

Belongs to the TRAFAC class OBG-HflX-like GTPase superfamily. OBG GTPase family. As to quaternary structure, interacts (via its C-terminal) with TAL1. Interacts with DFRP1/ZC3H15; this interaction prevents DRG1 poly-ubiquitination and degradation by proteasome. DRG1-ZC3H15/DFRP1 complex co-sediments with polysomes. Interacts with STK16. Interacts with JMJD7. Post-translationally, sumoylated by UBE2I in response to MEKK1-mediated stimuli. Hydroxylated (with S stereochemistry) at C-3 of Lys-22 by JMJD7. In terms of processing, phosphorylated at Thr-100 by STK16. Post-translationally, polyubiquitinated; this modification induces proteolytic degradation and is impaired by interaction with ZC3H15.

It localises to the nucleus. It is found in the cytoplasm. The enzyme catalyses GTP + H2O = GDP + phosphate + H(+). With respect to regulation, the GTPase activity is enhanced by potassium ions as well as by DFRP1 binding. Its function is as follows. Catalyzes the conversion of GTP to GDP through hydrolysis of the gamma-phosphate bond in GTP. Appears to have an intrinsic GTPase activity that is stimulated by ZC3H15/DFRP1 binding likely by increasing the affinity for the potassium ions. When hydroxylated at C-3 of 'Lys-22' by JMJD7, may bind to RNA and play a role in translation. Binds to microtubules and promotes microtubule polymerization and bundling that are required for mitotic spindle assembly during prophase to anaphase transition. GTPase activity is not necessary for these microtubule-related functions. The sequence is that of Developmentally-regulated GTP-binding protein 1 (DRG1) from Bos taurus (Bovine).